Here is a 145-residue protein sequence, read N- to C-terminus: Superoxide dismutase [Cu-Zn] (145 aa).

H37, H39, and H54 together coordinate Cu cation. C48 and C137 are oxidised to a cystine. Residues H54, H62, H71, and D74 each contribute to the Zn(2+) site. H111 provides a ligand contact to Cu cation.

The protein belongs to the Cu-Zn superoxide dismutase family. Homodimer. It depends on Cu cation as a cofactor. Zn(2+) is required as a cofactor.

It is found in the cytoplasm. It catalyses the reaction 2 superoxide + 2 H(+) = H2O2 + O2. Destroys radicals which are normally produced within the cells and which are toxic to biological systems. The sequence is that of Superoxide dismutase [Cu-Zn] from Drosophila busckii (Fruit fly).